A 264-amino-acid chain; its full sequence is uncharacterized protein (264 aa).

Residues 57-264 (RPPASPCPPR…VYPHPHLTAT (208 aa)) are disordered. The span at 140 to 153 (GKARRSPGRRRHPH) shows a compositional bias: basic residues. The span at 154–165 (SSFPQASSPSSP) shows a compositional bias: low complexity.

This is an uncharacterized protein from Homo sapiens (Human).